The chain runs to 207 residues: Large ribosomal subunit protein eL13 (207 aa).

Belongs to the eukaryotic ribosomal protein eL13 family. As to quaternary structure, component of the 60S large ribosomal subunit (LSU).

Its subcellular location is the cytoplasm. Its function is as follows. Component of the ribosome, a large ribonucleoprotein complex responsible for the synthesis of proteins in the cell. The small ribosomal subunit (SSU) binds messenger RNAs (mRNAs) and translates the encoded message by selecting cognate aminoacyl-transfer RNA (tRNA) molecules. The large subunit (LSU) contains the ribosomal catalytic site termed the peptidyl transferase center (PTC), which catalyzes the formation of peptide bonds, thereby polymerizing the amino acids delivered by tRNAs into a polypeptide chain. The nascent polypeptides leave the ribosome through a tunnel in the LSU and interact with protein factors that function in enzymatic processing, targeting, and the membrane insertion of nascent chains at the exit of the ribosomal tunnel. As part of the LSU, it is probably required for its formation and the maturation of rRNAs. This is Large ribosomal subunit protein eL13 (rpl-13) from Caenorhabditis elegans.